A 360-amino-acid polypeptide reads, in one-letter code: Photosystem II protein D1 (360 aa).

3 helical membrane-spanning segments follow: residues 29–46 (YIGW…SAIA), 118–133 (HFLI…EWEL), and 142–156 (WICV…AATA). Histidine 118 serves as a coordination point for chlorophyll a. Tyrosine 126 provides a ligand contact to pheophytin a. 2 residues coordinate [CaMn4O5] cluster: aspartate 170 and glutamate 189. A helical transmembrane segment spans residues 197–218 (FHMLGVAGVFGGSLFSAMHGSL). Histidine 198 is a chlorophyll a binding site. Residues histidine 215 and 264 to 265 (SF) each bind a quinone. Histidine 215 provides a ligand contact to Fe cation. Residue histidine 272 coordinates Fe cation. The helical transmembrane segment at 274–288 (FLAAWPVIGIWFTAL) threads the bilayer. [CaMn4O5] cluster contacts are provided by histidine 332, glutamate 333, aspartate 342, and alanine 344. A propeptide spanning residues 345–360 (AGDVAPVALTAPPING) is cleaved from the precursor.

The protein belongs to the reaction center PufL/M/PsbA/D family. In terms of assembly, PSII is composed of 1 copy each of membrane proteins PsbA, PsbB, PsbC, PsbD, PsbE, PsbF, PsbH, PsbI, PsbJ, PsbK, PsbL, PsbM, PsbT, PsbX, PsbY, PsbZ, Psb30/Ycf12, peripheral proteins PsbO, CyanoQ (PsbQ), PsbU, PsbV and a large number of cofactors. It forms dimeric complexes. Requires The D1/D2 heterodimer binds P680, chlorophylls that are the primary electron donor of PSII, and subsequent electron acceptors. It shares a non-heme iron and each subunit binds pheophytin, quinone, additional chlorophylls, carotenoids and lipids. D1 provides most of the ligands for the Mn4-Ca-O5 cluster of the oxygen-evolving complex (OEC). There is also a Cl(-1) ion associated with D1 and D2, which is required for oxygen evolution. The PSII complex binds additional chlorophylls, carotenoids and specific lipids. as cofactor. In terms of processing, tyr-161 forms a radical intermediate that is referred to as redox-active TyrZ, YZ or Y-Z. C-terminally processed by CtpA; processing is essential to allow assembly of the oxygen-evolving complex and thus photosynthetic growth.

Its subcellular location is the cellular thylakoid membrane. It carries out the reaction 2 a plastoquinone + 4 hnu + 2 H2O = 2 a plastoquinol + O2. In terms of biological role, photosystem II (PSII) is a light-driven water:plastoquinone oxidoreductase that uses light energy to abstract electrons from H(2)O, generating O(2) and a proton gradient subsequently used for ATP formation. It consists of a core antenna complex that captures photons, and an electron transfer chain that converts photonic excitation into a charge separation. The D1/D2 (PsbA/PsbD) reaction center heterodimer binds P680, the primary electron donor of PSII as well as several subsequent electron acceptors. This chain is Photosystem II protein D1, found in Trichormus azollae (Anabaena azollae).